Consider the following 413-residue polypeptide: Putative F-box protein At3g17560 (413 aa).

Residues 9 to 55 (TKLLFDLPQDVIEEIFSKVPVTCLRRIRSTCKRLYALLKDRGFIRKH) form the F-box domain.

The protein is Putative F-box protein At3g17560 of Arabidopsis thaliana (Mouse-ear cress).